The chain runs to 278 residues: Rhomboid protease GlpG (278 aa).

6 helical membrane-spanning segments follow: residues 95–115 (GPLT…MQIV), 143–163 (AFLH…WYLA), 170–190 (LGTG…GWGQ), 192–212 (LFSG…MGYV), 224–241 (ISLP…LVAG), and 245–267 (ILGL…LMAF). The active-site Nucleophile is S202. Residue H255 is part of the active site.

Belongs to the peptidase S54 family.

The protein resides in the cell inner membrane. The enzyme catalyses Cleaves type-1 transmembrane domains using a catalytic dyad composed of serine and histidine that are contributed by different transmembrane domains.. Its function is as follows. Rhomboid-type serine protease that catalyzes intramembrane proteolysis. The protein is Rhomboid protease GlpG of Yersinia enterocolitica serotype O:8 / biotype 1B (strain NCTC 13174 / 8081).